Reading from the N-terminus, the 556-residue chain is Dihydroxy-acid dehydratase (556 aa).

Cys47 is a [2Fe-2S] cluster binding site. Asp79 contacts Mg(2+). Cys120 serves as a coordination point for [2Fe-2S] cluster. The Mg(2+) site is built by Asp121 and Lys122. At Lys122 the chain carries N6-carboxylysine. Cys192 contributes to the [2Fe-2S] cluster binding site. Glu444 serves as a coordination point for Mg(2+). The active-site Proton acceptor is the Ser470.

It belongs to the IlvD/Edd family. Homodimer. [2Fe-2S] cluster is required as a cofactor. Requires Mg(2+) as cofactor.

It catalyses the reaction (2R)-2,3-dihydroxy-3-methylbutanoate = 3-methyl-2-oxobutanoate + H2O. The enzyme catalyses (2R,3R)-2,3-dihydroxy-3-methylpentanoate = (S)-3-methyl-2-oxopentanoate + H2O. The protein operates within amino-acid biosynthesis; L-isoleucine biosynthesis; L-isoleucine from 2-oxobutanoate: step 3/4. It participates in amino-acid biosynthesis; L-valine biosynthesis; L-valine from pyruvate: step 3/4. Functions in the biosynthesis of branched-chain amino acids. Catalyzes the dehydration of (2R,3R)-2,3-dihydroxy-3-methylpentanoate (2,3-dihydroxy-3-methylvalerate) into 2-oxo-3-methylpentanoate (2-oxo-3-methylvalerate) and of (2R)-2,3-dihydroxy-3-methylbutanoate (2,3-dihydroxyisovalerate) into 2-oxo-3-methylbutanoate (2-oxoisovalerate), the penultimate precursor to L-isoleucine and L-valine, respectively. This chain is Dihydroxy-acid dehydratase, found in Prochlorococcus marinus (strain NATL2A).